The sequence spans 41 residues: Large ribosomal subunit protein bL36 (41 aa).

This sequence belongs to the bacterial ribosomal protein bL36 family.

The polypeptide is Large ribosomal subunit protein bL36 (Bartonella bacilliformis (strain ATCC 35685 / KC583 / Herrer 020/F12,63)).